A 154-amino-acid polypeptide reads, in one-letter code: Aspartate carbamoyltransferase regulatory chain (154 aa).

Zn(2+)-binding residues include Cys-109, Cys-114, Cys-138, and Cys-141.

It belongs to the PyrI family. In terms of assembly, contains catalytic and regulatory chains. It depends on Zn(2+) as a cofactor.

Its function is as follows. Involved in allosteric regulation of aspartate carbamoyltransferase. The sequence is that of Aspartate carbamoyltransferase regulatory chain from Tolumonas auensis (strain DSM 9187 / NBRC 110442 / TA 4).